The following is a 453-amino-acid chain: DNA repair protein RadA (453 aa).

Residues 10–27 (CQECGYQSPKYLGRCPNC) form a C4-type zinc finger. Position 95–102 (95–102 (GDPGIGKS)) interacts with ATP. A RadA KNRFG motif motif is present at residues 251-255 (KNRFG). A lon-protease-like region spans residues 350 to 453 (DAYLKSAGGV…VGQVLKAVFS (104 aa)).

Belongs to the RecA family. RadA subfamily.

In terms of biological role, DNA-dependent ATPase involved in processing of recombination intermediates, plays a role in repairing DNA breaks. Stimulates the branch migration of RecA-mediated strand transfer reactions, allowing the 3' invading strand to extend heteroduplex DNA faster. Binds ssDNA in the presence of ADP but not other nucleotides, has ATPase activity that is stimulated by ssDNA and various branched DNA structures, but inhibited by SSB. Does not have RecA's homology-searching function. The polypeptide is DNA repair protein RadA (Streptococcus pyogenes serotype M6 (strain ATCC BAA-946 / MGAS10394)).